Reading from the N-terminus, the 121-residue chain is uncharacterized protein (121 aa).

The region spanning Ser47–Ser101 is the Cupin type-2 domain.

This is an uncharacterized protein from Aquifex aeolicus (strain VF5).